The chain runs to 476 residues: Adenosylhomocysteinase (476 aa).

Substrate-binding residues include Thr-61, Asp-140, and Glu-200. Residue 201–203 (TTT) coordinates NAD(+). Residues Lys-230 and Asp-234 each contribute to the substrate site. Residues Asn-235, 264-269 (GYGDVG), Glu-287, Asn-322, 343-345 (IGH), and Asn-389 contribute to the NAD(+) site.

The protein belongs to the adenosylhomocysteinase family. Requires NAD(+) as cofactor.

It localises to the cytoplasm. The catalysed reaction is S-adenosyl-L-homocysteine + H2O = L-homocysteine + adenosine. It participates in amino-acid biosynthesis; L-homocysteine biosynthesis; L-homocysteine from S-adenosyl-L-homocysteine: step 1/1. In terms of biological role, may play a key role in the regulation of the intracellular concentration of adenosylhomocysteine. The sequence is that of Adenosylhomocysteinase from Acidovorax sp. (strain JS42).